The chain runs to 183 residues: Adenine phosphoribosyltransferase (183 aa).

Belongs to the purine/pyrimidine phosphoribosyltransferase family. Homodimer.

The protein resides in the cytoplasm. It carries out the reaction AMP + diphosphate = 5-phospho-alpha-D-ribose 1-diphosphate + adenine. Its pathway is purine metabolism; AMP biosynthesis via salvage pathway; AMP from adenine: step 1/1. In terms of biological role, catalyzes a salvage reaction resulting in the formation of AMP, that is energically less costly than de novo synthesis. This is Adenine phosphoribosyltransferase from Escherichia fergusonii (strain ATCC 35469 / DSM 13698 / CCUG 18766 / IAM 14443 / JCM 21226 / LMG 7866 / NBRC 102419 / NCTC 12128 / CDC 0568-73).